A 1522-amino-acid chain; its full sequence is Histone-lysine N-methyltransferase EZH2 (1522 aa).

The interval Met1 to Glu196 is disordered. The span at Asn39 to Ala61 shows a compositional bias: basic and acidic residues. Composition is skewed to low complexity over residues Gln64–Val76 and Arg103–Leu130. Over residues Ile141–Ser162 the composition is skewed to polar residues. Positions Ala180–Thr195 are enriched in low complexity. The interval Pro190–Leu220 is SBD domain. The tract at residues Val221 to Lys250 is EBD domain. Residues Ala251–Val300 form a BAM domain region. Residues Pro301–Gln320 are SAL domain. Residues Leu321–Pro360 form an SRM domain region. An SANT1L domain region spans residues Arg361–Asp480. The interval Pro406–Asp426 is disordered. The segment covering Ser411–Asp422 has biased composition (polar residues). Residues Ala481–Ser560 form an MCSS domain region. Zn(2+) is bound by residues Cys508, Cys511, Cys516, His518, Cys570, Cys574, Cys615, Cys625, Cys685, His687, Cys691, Cys697, Cys699, Cys709, Cys713, Cys715, Cys720, Cys727, Cys729, Cys736, Cys746, Cys748, Cys755, Cys760, Cys763, and Cys784. The segment at Ala561–Gln650 is SANT2L domain. Residues Arg658–His780 enclose the CXC domain. An SET domain is found at Lys795 to Gly919. 4 residues coordinate S-adenosyl-L-homocysteine: Tyr809, Lys852, Ser854, and Tyr855. S-adenosyl-L-methionine-binding residues include Tyr809, Lys852, Ser854, Tyr855, Asn880, His881, and Thr926. Position 881 (His881) interacts with S-adenosyl-L-homocysteine. Residue Lys927 participates in S-adenosyl-L-homocysteine binding. A disordered region spans residues Asn933–Glu1522. Over residues Gln935 to Lys946 the composition is skewed to polar residues. A compositionally biased stretch (acidic residues) spans Gly971–Trp988. Positions Gln992–Gln1024 are enriched in low complexity. A compositionally biased stretch (polar residues) spans Ala1025–Ser1038. Positions Ser1053–Gln1066 are enriched in basic and acidic residues. Over residues Gln1072 to Gln1091 the composition is skewed to low complexity. The segment covering Asp1127 to Glu1136 has biased composition (polar residues). Over residues Lys1142–Pro1162 the composition is skewed to basic residues. Basic and acidic residues-rich tracts occupy residues Ser1207–Glu1221 and Val1228–Asp1238. Low complexity predominate over residues Lys1255–Asn1299. Residues His1316 to Thr1330 are compositionally biased toward polar residues. 2 stretches are compositionally biased toward low complexity: residues Ser1355–Ser1385 and Ser1415–Ser1428. Residues Ser1455–Gln1464 are compositionally biased toward polar residues. Residues Glu1465 to Ser1494 are compositionally biased toward basic and acidic residues.

The protein belongs to the class V-like SAM-binding methyltransferase superfamily. Histone-lysine methyltransferase family. EZ subfamily. In terms of assembly, component of the polycomb repressive complex 2 (PRC2) that consists of four core subunits icluding EZH2, EED, SUZ12, and RBBP4, among which EZH2 is the catalytic subunit and which minimally requires EED and SUZ12 for catalysis.

Its subcellular location is the nucleus. The catalysed reaction is L-lysyl(27)-[histone H3] + 3 S-adenosyl-L-methionine = N(6),N(6),N(6)-trimethyl-L-lysyl(27)-[histone H3] + 3 S-adenosyl-L-homocysteine + 3 H(+). The end product of PRC2 catalysis, H3K27me3, interacts with EED to stimulate the enzymatic activity of PRC2 allosterically. The enzymatic activity of PRC2 is regulated in a very complex manner and PCR2 can adopt different stages including the autoinhibited (A); SAM-bound autoinhibited (A'), basal (B), and H3K27me3-stimulated (S) stages. Actictivity is inhibited by pyridone inhibitors such as GSK126. Functionally, catalytic subunit of the of the Polycomb Repressive Complex 2 (PRC2), a histone H3 lysine methyltransferase responsible for generating mono-, di-, and tri-methylation on Lys27 (H3K27me1, H3K27me2 and H3K27me3). The tri-methylated form is known to be critical in gene repression, and its proper placement is essential in defining repression patterns during development. The PRC2 complex interacts with thousands of RNA species in vivo, but the physiological function of RNA binding has still to be determined. In Chaetomium thermophilum (strain DSM 1495 / CBS 144.50 / IMI 039719) (Thermochaetoides thermophila), this protein is Histone-lysine N-methyltransferase EZH2.